A 146-amino-acid polypeptide reads, in one-letter code: Large ribosomal subunit protein uL15 (146 aa).

A compositionally biased stretch (basic and acidic residues) spans 1–13 (MKLHELKAAEGSR). The disordered stretch occupies residues 1–61 (MKLHELKAAE…GGQTPLFRRM (61 aa)). 2 stretches are compositionally biased toward gly residues: residues 23 to 35 (TSSG…GRGQ) and 42 to 52 (SGGGVRLGFEG).

This sequence belongs to the universal ribosomal protein uL15 family. Part of the 50S ribosomal subunit.

Its function is as follows. Binds to the 23S rRNA. The polypeptide is Large ribosomal subunit protein uL15 (Streptococcus uberis (strain ATCC BAA-854 / 0140J)).